We begin with the raw amino-acid sequence, 352 residues long: N-acetyl-gamma-glutamyl-phosphate reductase (352 aa).

Cys-156 is an active-site residue.

Belongs to the NAGSA dehydrogenase family. Type 1 subfamily.

Its subcellular location is the cytoplasm. It catalyses the reaction N-acetyl-L-glutamate 5-semialdehyde + phosphate + NADP(+) = N-acetyl-L-glutamyl 5-phosphate + NADPH + H(+). The protein operates within amino-acid biosynthesis; L-arginine biosynthesis; N(2)-acetyl-L-ornithine from L-glutamate: step 3/4. In terms of biological role, catalyzes the NADPH-dependent reduction of N-acetyl-5-glutamyl phosphate to yield N-acetyl-L-glutamate 5-semialdehyde. The polypeptide is N-acetyl-gamma-glutamyl-phosphate reductase (Rhodospirillum rubrum (strain ATCC 11170 / ATH 1.1.1 / DSM 467 / LMG 4362 / NCIMB 8255 / S1)).